A 501-amino-acid chain; its full sequence is Dipeptide and tripeptide permease A (501 aa).

Over 1 to 34 (MSTANNKPTESVSLNAFKQPKSFYLIFSIELWER) the chain is Cytoplasmic. A helical transmembrane segment spans residues 35-55 (FGYYGLQGIMAVYLVKQLGMS). Residues 56 to 59 (EADS) are Periplasmic-facing. Residues 60 to 80 (ITLFSSFSALVYGLVAIGGWL) form a helical membrane-spanning segment. Over 81-89 (GDKVLGTKR) the chain is Cytoplasmic. The helical transmembrane segment at 90 to 110 (VIMLGAIVLAIGYGLVAWSGH) threads the bilayer. Position 111 (Asp-111) is a topological domain, periplasmic. The helical transmembrane segment at 112-132 (VAIVYMGMATIAVGNGLFKAN) threads the bilayer. Topologically, residues 133 to 153 (PSSLLSTCYAKDDPRLDGAFT) are cytoplasmic. A helical transmembrane segment spans residues 154–174 (MYYMSINIGSFFSMLATPWLA). Topologically, residues 175–178 (AKFG) are periplasmic. Residues 179 to 199 (WSVAFALSFVGMLITVVNFLF) form a helical membrane-spanning segment. The Cytoplasmic segment spans residues 200–217 (CRSWVKDYGSKPDFEAVH). The chain crosses the membrane as a helical span at residues 218–238 (FGKLLATIAGVIVLIAIATWL). The Periplasmic portion of the chain corresponds to 239-246 (LHNQGIAR). The helical transmembrane segment at 247–267 (MVLGVIALGIVIIFGKEAFAM) threads the bilayer. Topologically, residues 268–274 (QGAARRK) are cytoplasmic. Residues 275 to 295 (MIVAFILMLEAIIFFVLYSQM) traverse the membrane as a helical segment. The Periplasmic segment spans residues 296-320 (PTSLNFFAIRNVEHTILGIAVEPEQ). A helical transmembrane segment spans residues 321–341 (YQALNPFWIIIGSPILAAIYN). Residues 342-352 (KMGDTLPMPTK) are Cytoplasmic-facing. The chain crosses the membrane as a helical span at residues 353-373 (FAIGMVLCSGAFLVLPLGAKF). Residues 374–383 (ATDAGIVSVN) lie on the Periplasmic side of the membrane. Residues 384 to 404 (WLILSYGLQSIGELMISGLGL) form a helical membrane-spanning segment. Residues 405 to 414 (AMVAQLVPQR) lie on the Cytoplasmic side of the membrane. Residues 415–435 (LMGFIMGSWFLTTAGANLIGG) traverse the membrane as a helical segment. At 436 to 459 (YVAGMMAVPENVTDPLMSLEVYGR) the chain is on the periplasmic side. The helical transmembrane segment at 460–480 (VFLQIGVATAVIAALMLITAP) threads the bilayer. The Cytoplasmic portion of the chain corresponds to 481–501 (KLNRMTQDDEENAKAAKTATA).

The protein belongs to the major facilitator superfamily. Proton-dependent oligopeptide transporter (POT/PTR) (TC 2.A.17) family. DtpA subfamily.

The protein resides in the cell inner membrane. In terms of biological role, proton-dependent permease that transports di- and tripeptides. In Citrobacter koseri (strain ATCC BAA-895 / CDC 4225-83 / SGSC4696), this protein is Dipeptide and tripeptide permease A.